Consider the following 475-residue polypeptide: Pentatricopeptide repeat-containing protein At1g29710, mitochondrial (475 aa).

Residues methionine 1–histidine 37 constitute a mitochondrion transit peptide. 6 PPR repeats span residues alanine 83–methionine 117, aspartate 118–leucine 148, aspartate 153–tryptophan 183, asparagine 184–proline 218, asparagine 219–proline 254, and serine 255–glutamate 285. The segment at tyrosine 350 to lysine 380 is type E(+) motif. A type DYW motif region spans residues glutamate 381 to tryptophan 475.

The protein belongs to the PPR family. PCMP-H subfamily.

The protein resides in the mitochondrion. This Arabidopsis thaliana (Mouse-ear cress) protein is Pentatricopeptide repeat-containing protein At1g29710, mitochondrial (PCMP-H67).